The chain runs to 424 residues: CinA-like protein (424 aa).

The protein belongs to the CinA family.

In Shewanella sediminis (strain HAW-EB3), this protein is CinA-like protein.